Consider the following 254-residue polypeptide: MLLVIDVGNSNIVLGIYDEERLVRDWRVSTDKSKTIDEYGILFHDLFRLADIVFTDVKDIIISSVVPTLTGVLEKLSRQYFKISPYVVGPGIKTGMPIHYDNPKEVGADRIVNAIAGFEKYRTALIIVDFGTATTFDYVNKKGEYCGGAIAPGLAISMEALFMKASKLPRVDIARPPSIIAKNTVNSMQAGIFFGYVGLVDGIVQRMKGEGKENPKVIATGGLASLIAPESVTIEEVDEFLTLEGLRIIHQRNK.

ATP is bound at residue 6–13; it reads DVGNSNIV. Residues Tyr-100 and 107–110 contribute to the substrate site; that span reads GADR. The active-site Proton acceptor is the Asp-109. Position 129 (Asp-129) interacts with K(+). Residue Thr-132 coordinates ATP. Position 184 (Thr-184) interacts with substrate.

The protein belongs to the type III pantothenate kinase family. As to quaternary structure, homodimer. NH4(+) is required as a cofactor. The cofactor is K(+).

The protein resides in the cytoplasm. It catalyses the reaction (R)-pantothenate + ATP = (R)-4'-phosphopantothenate + ADP + H(+). It participates in cofactor biosynthesis; coenzyme A biosynthesis; CoA from (R)-pantothenate: step 1/5. Catalyzes the phosphorylation of pantothenate (Pan), the first step in CoA biosynthesis. This chain is Type III pantothenate kinase, found in Geobacter sp. (strain M21).